Consider the following 540-residue polypeptide: GMP synthase [glutamine-hydrolyzing] (540 aa).

Positions 29 to 222 (KILIVDFGSQ…VRKVAGLTGD (194 aa)) constitute a Glutamine amidotransferase type-1 domain. Cys106 functions as the Nucleophile in the catalytic mechanism. Residues His196 and Glu198 contribute to the active site. The GMPS ATP-PPase domain maps to 223–415 (WTMRAFREEA…LGLPEIFVGR (193 aa)). 250 to 256 (SGGVDSA) contacts ATP.

Homodimer.

It carries out the reaction XMP + L-glutamine + ATP + H2O = GMP + L-glutamate + AMP + diphosphate + 2 H(+). It functions in the pathway purine metabolism; GMP biosynthesis; GMP from XMP (L-Gln route): step 1/1. Functionally, catalyzes the synthesis of GMP from XMP. This is GMP synthase [glutamine-hydrolyzing] from Rhodopseudomonas palustris (strain HaA2).